Here is a 332-residue protein sequence, read N- to C-terminus: Phosphoenolpyruvate transferase (332 aa).

Aspartate 63 is a 7,8-didemethyl-8-hydroxy-5-deazariboflavin binding site.

This sequence belongs to the CofD family. Homodimer. Requires Mg(2+) as cofactor.

It catalyses the reaction enolpyruvoyl-2-diphospho-5'-guanosine + 7,8-didemethyl-8-hydroxy-5-deazariboflavin = dehydro coenzyme F420-0 + GMP + H(+). The protein operates within cofactor biosynthesis; coenzyme F420 biosynthesis. Catalyzes the transfer of the phosphoenolpyruvate moiety from enoylpyruvoyl-2-diphospho-5'-guanosine (EPPG) to 7,8-didemethyl-8-hydroxy-5-deazariboflavin (FO) with the formation of dehydro coenzyme F420-0 and GMP. The sequence is that of Phosphoenolpyruvate transferase from Nocardia farcinica (strain IFM 10152).